The following is a 292-amino-acid chain: Glycine--tRNA ligase alpha subunit (292 aa).

The protein belongs to the class-II aminoacyl-tRNA synthetase family. As to quaternary structure, tetramer of two alpha and two beta subunits.

It is found in the cytoplasm. It carries out the reaction tRNA(Gly) + glycine + ATP = glycyl-tRNA(Gly) + AMP + diphosphate. The polypeptide is Glycine--tRNA ligase alpha subunit (Synechococcus elongatus (strain ATCC 33912 / PCC 7942 / FACHB-805) (Anacystis nidulans R2)).